Here is a 387-residue protein sequence, read N- to C-terminus: Acetylajmalan esterase (387 aa).

Positions 1-22 (MGFARLLHLVFSLLVFAGITNG) are cleaved as a signal peptide. The active-site Nucleophile is the Ser36. N-linked (GlcNAc...) asparagine glycans are attached at residues Asn98, Asn180, Asn199, Asn249, and Asn296. Catalysis depends on residues Asp337 and His340.

The protein belongs to the 'GDSL' lipolytic enzyme family.

The enzyme catalyses 17-O-acetylajmaline + H2O = ajmaline + acetate + H(+). It carries out the reaction 17-O-acetylnorajmaline + H2O = norajmaline + acetate + H(+). It functions in the pathway alkaloid biosynthesis; ajmaline biosynthesis. In terms of biological role, acetylesterase involved in the biosynthesis of ajmaline-type monoterpenoid indole alkaloids (MIAs) natural products, important plant-derived pharmaceuticals used in the therapy of heart disorders. Deacetylates 17-O-acetylajmaline and 17-O-acetylnorajmaline to produce ajmaline and norajmaline, but is inactive toward other acetylated alkaloids. The protein is Acetylajmalan esterase of Rauvolfia serpentina (Serpentine wood).